The sequence spans 1076 residues: MKCYNPSAFVPMAVTLVTVVIYLGVFIPLLIIHETVPSAPDDPTLYNGLNLTEAWLDLQSLSDGYHPFNSRKNDDVRNWLLKRIDEILDHNQIQYTTENETADTSDVQLESDFDKDVPESMSGPNNFNDDSVEYHEDLRTRKVSPAVTVFNDLRSNYSSNALTSIGVKGRRLGISTYFEGNNIICYVRGNDDEEGEWWKTGSVNSKGKMHGRGGVMVNAHFDSVSTGFGATDDGVGVVTALQLIRYFTTPENRPQKGFVALFNNGEEDGLYGAKAFLSHPMAKFVHTFLNLEGAGAGGRATLFRSTDTEVTRAYAHAKHPFGTVVSSDGFSSGFVRSETDYVVFRAEGYRGLDVAFWQPRSQYHTDQDDAKHTSIDSLWHMLSASVATTRSLTRDTSNTFVGPRSDDKIGKVSNGKGSDGVWFDIFGTVFAVFRLRTLFAWSLTLLIASPLILFAVSYLLNRQEKFYFFAGSIKSKNPEDEPISLGGWRGAFRFPITLFITSAITFACASLINKINPMIIYSSPYAVWSMSATLFFSVFWFIMAGCNFVRPSALQRGYAFMWMFVFGWILLVVATVYEDRFKISGGYLFVFYEAAIFLATLIAICEQFALPRKSTYIEDSQNDHSDNQDHHHQAVMGTDGANGADEPNADDEAAEEDQEETVNATAFPHETTPLIGGGQPSHRASVSTSFANRYRQVVPESYDGPADHDDKKGHKKHPYGGEQEWSAKLPIWTWLVQYLLVGPFILVILGQVGLFLVAALHQTGTDGSPLFLPYLIVAIFSILLLLPVTPFIHRLTHHMPTFFFLVFIGTLIYNLVAFPFSPNNRYKAYFQQTVDLDTGVNRVTLVGIEQYIRNIITNIPSAAGQSINCEANPRIRSGLSFCSYEGIPPQVVDNVVEGVPPEKGYSDWLSFNVSRVPNENKATFHISGVETRACILRFDDPFSEFKVHGGAKSEERWDDVPDSGSDQIKLWHRDWNKEWVVDVEWAVGEDMKPGDEGRSGRVVCLWSDANKRGVIPALDEAQRFSPQWTSVVKLMDGLVEGSKRRVGELVRVGGWKKGRRDDFSLALGLAFLLAYV.

At 1–11 (MKCYNPSAFVP) the chain is on the cytoplasmic side. A helical membrane pass occupies residues 12–32 (MAVTLVTVVIYLGVFIPLLII). Residues 33-437 (HETVPSAPDD…TVFAVFRLRT (405 aa)) lie on the Vacuolar side of the membrane. N-linked (GlcNAc...) asparagine glycans are attached at residues Asn50, Asn99, and Asn156. Zn(2+) is bound by residues His220 and Asp232. The active-site Proton acceptor is Glu266. Zn(2+)-binding residues include Glu267, Glu292, and His364. The chain crosses the membrane as a helical span at residues 438 to 458 (LFAWSLTLLIASPLILFAVSY). The Cytoplasmic segment spans residues 459–491 (LLNRQEKFYFFAGSIKSKNPEDEPISLGGWRGA). A helical transmembrane segment spans residues 492 to 512 (FRFPITLFITSAITFACASLI). Over 513–525 (NKINPMIIYSSPY) the chain is Vacuolar. A helical membrane pass occupies residues 526–546 (AVWSMSATLFFSVFWFIMAGC). At 547 to 556 (NFVRPSALQR) the chain is on the cytoplasmic side. The chain crosses the membrane as a helical span at residues 557-577 (GYAFMWMFVFGWILLVVATVY). The Vacuolar portion of the chain corresponds to 578–584 (EDRFKIS). A helical membrane pass occupies residues 585–605 (GGYLFVFYEAAIFLATLIAIC). Topologically, residues 606–738 (EQFALPRKST…LPIWTWLVQY (133 aa)) are cytoplasmic. Disordered regions lie at residues 619-662 (DSQN…EETV) and 701-720 (SYDG…HPYG). Over residues 621-632 (QNDHSDNQDHHH) the composition is skewed to basic and acidic residues. Positions 647–660 (PNADDEAAEEDQEE) are enriched in acidic residues. The chain crosses the membrane as a helical span at residues 739 to 759 (LLVGPFILVILGQVGLFLVAA). Topologically, residues 760 to 771 (LHQTGTDGSPLF) are vacuolar. A helical membrane pass occupies residues 772–792 (LPYLIVAIFSILLLLPVTPFI). Residues 793-799 (HRLTHHM) lie on the Cytoplasmic side of the membrane. Residues 800-820 (PTFFFLVFIGTLIYNLVAFPF) traverse the membrane as a helical segment. Residues 821–1076 (SPNNRYKAYF…LGLAFLLAYV (256 aa)) lie on the Vacuolar side of the membrane. Residue Asn912 is glycosylated (N-linked (GlcNAc...) asparagine).

It belongs to the peptidase M28 family. Requires Zn(2+) as cofactor.

The protein localises to the vacuole membrane. In terms of biological role, may be involved in vacuolar sorting and osmoregulation. This chain is Vacuolar membrane protease, found in Sclerotinia sclerotiorum (strain ATCC 18683 / 1980 / Ss-1) (White mold).